A 262-amino-acid chain; its full sequence is LOB domain-containing protein 18 (262 aa).

One can recognise an LOB domain in the interval 36-138 (GPCGACKFLR…AEVSYLQAHL (103 aa)). The disordered stretch occupies residues 223 to 262 (VGLGGENSHDLQALAHELLHRQGSPPPAATDHSPSRTMSR).

Belongs to the LOB domain-containing protein family. In terms of assembly, homodimer and heterodimer with LBD16. Interacts with GIP1. In terms of tissue distribution, expressed in roots, stems, leaves and flowers. Expressed in vascular tissues of hypocotyls, leaves, roots, developing floral organs and siliques.

It localises to the nucleus. Functionally, involved in the positive regulation of tracheary element (TE) differentiation. Involved in a positive feedback loop that maintains or promotes NAC030/VND7 expression that regulates TE differentiation-related genes. Functions in the initiation and emergence of lateral roots, in conjunction with LBD16, downstream of ARF7 and ARF19. Transcriptional activator that directly regulates EXPA14, a gene encoding a cell wall-loosening factor that promotes lateral root emergence. Activates EXPA14 by directly binding to a specific region of its promoter. Transcriptional activator that directly regulates EXPA17, a gene encoding a cell wall-loosening factor that promotes lateral root emergence. Acts downstream of the auxin influx carriers AUX1 and LAX1 in the regulation of lateral root initiation and development. In Arabidopsis thaliana (Mouse-ear cress), this protein is LOB domain-containing protein 18 (LBD18).